A 203-amino-acid chain; its full sequence is MIRLFTFGIITMLVLVIARLAIQRAYKYITLNTNINTTESKTRLSIRLVSIIPYYLPLFEGLQNFGQYVLPDYPVGAIPLYKKILLPMLIFYMNHAILGLVTFFALYYVLVRNKSPITVHQLVRFNSMQSILLFLVGSLFGAIFRAFPIEFRISFIGLTVCNMMFWFILSTITYSIVKAIQGKYSNIPVISEAVRIQISGYNT.

Transmembrane regions (helical) follow at residues 2-22, 51-71, 84-104, 131-151, and 153-173; these read IRLFTFGIITMLVLVIARLAI, IIPYYLPLFEGLQNFGQYVLP, ILLPMLIFYMNHAILGLVTFF, ILLFLVGSLFGAIFRAFPIEF, and ISFIGLTVCNMMFWFILSTIT.

This sequence belongs to the Tic20 family.

It localises to the plastid. The protein resides in the chloroplast membrane. In Porphyra purpurea (Red seaweed), this protein is Tic20 family protein Ycf60 (ycf60).